A 601-amino-acid polypeptide reads, in one-letter code: Aspartate--tRNA(Asp/Asn) ligase (601 aa).

Glutamate 173 provides a ligand contact to L-aspartate. An aspartate region spans residues 197 to 200; sequence QLFK. Position 219 (arginine 219) interacts with L-aspartate. ATP-binding positions include 219 to 221 and glutamine 228; that span reads RDE. Histidine 456 is an L-aspartate binding site. Glutamate 490 is an ATP binding site. Arginine 497 provides a ligand contact to L-aspartate. Residue 542 to 545 coordinates ATP; that stretch reads GWDR. Residues 566 to 601 form a disordered region; the sequence is GGGYDPLTQAPAPITAEQRRESGVDAVPDDETAPQA. A compositionally biased stretch (acidic residues) spans 592-601; that stretch reads VPDDETAPQA.

It belongs to the class-II aminoacyl-tRNA synthetase family. Type 1 subfamily. As to quaternary structure, homodimer.

The protein resides in the cytoplasm. The enzyme catalyses tRNA(Asx) + L-aspartate + ATP = L-aspartyl-tRNA(Asx) + AMP + diphosphate. In terms of biological role, aspartyl-tRNA synthetase with relaxed tRNA specificity since it is able to aspartylate not only its cognate tRNA(Asp) but also tRNA(Asn). Reaction proceeds in two steps: L-aspartate is first activated by ATP to form Asp-AMP and then transferred to the acceptor end of tRNA(Asp/Asn). The polypeptide is Aspartate--tRNA(Asp/Asn) ligase (Beutenbergia cavernae (strain ATCC BAA-8 / DSM 12333 / CCUG 43141 / JCM 11478 / NBRC 16432 / NCIMB 13614 / HKI 0122)).